The chain runs to 474 residues: tRNA-2-methylthio-N(6)-dimethylallyladenosine synthase (474 aa).

Positions 3 to 120 constitute an MTTase N-terminal domain; it reads KKLLIKTWGC…LPEMIKQSQS (118 aa). [4Fe-4S] cluster-binding residues include Cys-12, Cys-49, Cys-83, Cys-157, Cys-161, and Cys-164. The 233-residue stretch at 143 to 375 folds into the Radical SAM core domain; it reads RAEGATAFVS…QQTVNTQAMR (233 aa). In terms of domain architecture, TRAM spans 378-441; it reads RQMLDTEQRV…ANSLRGELVR (64 aa).

It belongs to the methylthiotransferase family. MiaB subfamily. In terms of assembly, monomer. [4Fe-4S] cluster is required as a cofactor.

It localises to the cytoplasm. The enzyme catalyses N(6)-dimethylallyladenosine(37) in tRNA + (sulfur carrier)-SH + AH2 + 2 S-adenosyl-L-methionine = 2-methylsulfanyl-N(6)-dimethylallyladenosine(37) in tRNA + (sulfur carrier)-H + 5'-deoxyadenosine + L-methionine + A + S-adenosyl-L-homocysteine + 2 H(+). Its function is as follows. Catalyzes the methylthiolation of N6-(dimethylallyl)adenosine (i(6)A), leading to the formation of 2-methylthio-N6-(dimethylallyl)adenosine (ms(2)i(6)A) at position 37 in tRNAs that read codons beginning with uridine. The protein is tRNA-2-methylthio-N(6)-dimethylallyladenosine synthase of Vibrio campbellii (strain ATCC BAA-1116).